The following is a 325-amino-acid chain: Probable siderophore-binding lipoprotein YfiY (325 aa).

Positions 1–20 (MKKHISMLFVFLMAVMVLSA) are cleaved as a signal peptide. A lipid anchor (N-palmitoyl cysteine) is attached at Cys-21. Cys-21 carries the S-diacylglycerol cysteine lipid modification. The region spanning 56–325 (RIVVLTNEGT…DIETYFLKTK (270 aa)) is the Fe/B12 periplasmic-binding domain. The residue at position 290 (Ser-290) is a Phosphoserine. Position 302 is a phosphothreonine (Thr-302).

The protein belongs to the bacterial solute-binding protein 8 family. In terms of assembly, the complex is composed of one ATP-binding protein (YusV), two transmembrane proteins (YfiZ and YfhA) and a solute-binding protein (YfiY). Interacts with FloT.

Its subcellular location is the cell membrane. It localises to the cytoplasm. The protein localises to the membrane raft. In terms of biological role, part of the ABC transporter complex YfiYZ/YfhA/YusV involved in import of the iron-hydroxamate siderophores schizokinen, arthrobactin and corprogen. Binds the siderophores and delivers them to the surface of YfiZ/YfhA. This is Probable siderophore-binding lipoprotein YfiY (yfiY) from Bacillus subtilis (strain 168).